The primary structure comprises 502 residues: Lysine--tRNA ligase (502 aa).

Positions 410 and 417 each coordinate Mg(2+).

This sequence belongs to the class-II aminoacyl-tRNA synthetase family. In terms of assembly, homodimer. Requires Mg(2+) as cofactor.

The protein localises to the cytoplasm. The catalysed reaction is tRNA(Lys) + L-lysine + ATP = L-lysyl-tRNA(Lys) + AMP + diphosphate. In Photobacterium profundum (strain SS9), this protein is Lysine--tRNA ligase.